The primary structure comprises 383 residues: Galactokinase (383 aa).

34-37 (EHTD) provides a ligand contact to substrate. 124-130 (GAGLSSS) contacts ATP. The Mg(2+) site is built by Ser130 and Glu162. Residue Asp174 is the Proton acceptor of the active site. A substrate-binding site is contributed by Tyr223.

It belongs to the GHMP kinase family. GalK subfamily.

It is found in the cytoplasm. It carries out the reaction alpha-D-galactose + ATP = alpha-D-galactose 1-phosphate + ADP + H(+). It functions in the pathway carbohydrate metabolism; galactose metabolism. Catalyzes the transfer of the gamma-phosphate of ATP to D-galactose to form alpha-D-galactose-1-phosphate (Gal-1-P). The sequence is that of Galactokinase from Yersinia pseudotuberculosis serotype IB (strain PB1/+).